We begin with the raw amino-acid sequence, 92 residues long: Putative regulatory protein Tpet_0986 (92 aa).

The protein belongs to the RemA family.

The sequence is that of Putative regulatory protein Tpet_0986 from Thermotoga petrophila (strain ATCC BAA-488 / DSM 13995 / JCM 10881 / RKU-1).